The primary structure comprises 156 residues: Ribosome maturation factor RimP (156 aa).

This sequence belongs to the RimP family.

The protein resides in the cytoplasm. Its function is as follows. Required for maturation of 30S ribosomal subunits. In Bacillus subtilis (strain 168), this protein is Ribosome maturation factor RimP.